The following is a 379-amino-acid chain: Salicylate/benzoate carboxyl methyltransferase (379 aa).

Position 40 (Y40) interacts with S-adenosyl-L-homocysteine. Salicylate is bound at residue Q47. Residues C82, N87, D119, L120, S155, and F156 each coordinate S-adenosyl-L-homocysteine. The salicylate site is built by H176 and W177. Residues N188, D275, F277, and N278 each coordinate Mg(2+).

The protein belongs to the methyltransferase superfamily. Type-7 methyltransferase family. SABATH subfamily. Homodimer. Mg(2+) is required as a cofactor. In terms of tissue distribution, expressed in flowers and at lower levels in leaves and stems. Hardly detected in roots and siliques. Expressed in the sepals and the leaf trichomes and hydathodes.

It catalyses the reaction benzoate + S-adenosyl-L-methionine = methyl benzoate + S-adenosyl-L-homocysteine. The catalysed reaction is salicylate + S-adenosyl-L-methionine = methyl salicylate + S-adenosyl-L-homocysteine. Its function is as follows. Methyltransferase involved in the biosynthesis of methylsalicylate in response to stresses. Utilizes salicylic acid (SA) more efficiently than benzoic acid (BA). Can also use anthranilic acid and m-hydroxybenzoic acid as substrate. The protein is Salicylate/benzoate carboxyl methyltransferase (BSMT1) of Arabidopsis thaliana (Mouse-ear cress).